A 148-amino-acid chain; its full sequence is Outer envelope pore protein 16-1, chloroplastic (148 aa).

Residues 2-73 (PSSTFSGTVS…EHALKKLCKE (72 aa)) form a contains 4 beta strands region. The next 3 helical transmembrane spans lie at 75–91 (VYWGAAGGVYIGTEYGI), 102–118 (NAMLAGAATGAVLSAVG), and 125–142 (IVIDAILGGALATASQFV).

The protein belongs to the Tim17/Tim22/Tim23 family. Plastid outer envelope porin OEP16 (TC 1.B.30) subfamily. In terms of assembly, homodimer and oligomers in membrane. Forms large complexes including TOC33, pPORA and OEP161 during pPORA import into plastids at the plastid envelope membrane. Expressed predominantly in leaves and cotyledons.

Its subcellular location is the plastid. It is found in the chloroplast outer membrane. The protein localises to the etioplast membrane. With respect to regulation, stimulated by GTP. Voltage-dependent high-conductance channel with a slight cation-selectivity; selective for amino acids but excludes triosephosphates or uncharged sugars. Non-essential amino acid-selective channel protein and translocation pore for NADPH:protochlorophyllide oxidoreductase A (PORA) and possibly PORB. Involved in PORA precursor (pPORA) import and thus confers photoprotection onto etiolated seedlings during greening. This chain is Outer envelope pore protein 16-1, chloroplastic (OEP161), found in Arabidopsis thaliana (Mouse-ear cress).